The primary structure comprises 101 residues: Large ribosomal subunit protein uL23 (101 aa).

This sequence belongs to the universal ribosomal protein uL23 family. Part of the 50S ribosomal subunit. Contacts protein L29, and trigger factor when it is bound to the ribosome.

In terms of biological role, one of the early assembly proteins it binds 23S rRNA. One of the proteins that surrounds the polypeptide exit tunnel on the outside of the ribosome. Forms the main docking site for trigger factor binding to the ribosome. In Corynebacterium jeikeium (strain K411), this protein is Large ribosomal subunit protein uL23.